Reading from the N-terminus, the 129-residue chain is MDKKAIFDSVSNMEEQIGELYQQLGDLKTNLGEMLEENNRLNLENEHLRRRLSLTDEATPEPKAEIEAEHGVMAPNRKEAMQQMIELGEGYDNLVQLYKEGFHVCNVHFGSPRGNDEDCLFCLSLLNKK.

Zn(2+) contacts are provided by His-103, Cys-105, Cys-119, and Cys-122.

It belongs to the YabA family. Homotetramer. Interacts with both DnaA and DnaN, acting as a bridge between these two proteins. Zn(2+) is required as a cofactor.

It is found in the cytoplasm. It localises to the nucleoid. Functionally, involved in control of chromosome replication initiation. Inhibits the cooperative binding of DnaA to the oriC region, thus negatively regulating initiation of chromosome replication. Inhibits the ability of DnaA-ATP to form a helix on DNA; does not disassemble preformed DnaA-DNA helices. Decreases the residence time of DnaA on the chromosome at its binding sites (oriC, replication forks and promoter-binding sites). Tethers DnaA to the replication machinery via the DNA polymerase beta sliding clamp subunit (dnaN). Associates with oriC and other DnaA targets on the chromosome in a DnaA-dependent manner. This is Replication initiation control protein YabA from Listeria monocytogenes serotype 4b (strain CLIP80459).